We begin with the raw amino-acid sequence, 67 residues long: Phycobilisome 7.8 kDa linker polypeptide, allophycocyanin-associated, core (67 aa).

Positions 1–56 (MRMFRITACVPSQTRIRTQRELQNTYFTKLVPYDNSFREQQRIMKMGGKIVKVELA) constitute a CpcD-like domain.

Belongs to the phycobilisome linker protein family.

The protein resides in the cellular thylakoid membrane. Functionally, rod linker protein, associated with allophycocyanin. Linker polypeptides determine the state of aggregation and the location of the disk-shaped phycobiliprotein units within the phycobilisome and modulate their spectroscopic properties in order to mediate a directed and optimal energy transfer. This chain is Phycobilisome 7.8 kDa linker polypeptide, allophycocyanin-associated, core (apcC), found in Synechocystis sp. (strain ATCC 27184 / PCC 6803 / Kazusa).